Here is a 322-residue protein sequence, read N- to C-terminus: GRB2-related adaptor protein 2 (322 aa).

The SH3 1 domain maps to 1–56 (MEATAKFDFMASGEDELSFRTGDILKILSNQEEWLKAELGSQEGYVPKNFIDIEFP). Position 45 is a phosphotyrosine (Tyr45). The SH2 domain maps to 58–149 (WFHEGLSRHQ…QKQVFLRDGT (92 aa)). Lys106 carries the N6-acetyllysine modification. The tract at residues 143-216 (VFLRDGTQDQ…TPGPQPPQQQ (74 aa)) is disordered. Positions 148 to 163 (GTQDQGHRGNSLDRRS) are enriched in basic and acidic residues. Phosphoserine is present on Ser186. The span at 193-204 (PQQFHPHQQPSP) shows a compositional bias: low complexity. Residue Ser230 is modified to Phosphoserine. At Thr254 the chain carries Phosphothreonine. An SH3 2 domain is found at 263-322 (GRVRWARALYDFEALEEDELGFRSGEVVEVLDSSNPSWWTGRLHNKLGLFPANYVAPMMR).

Belongs to the GRB2/sem-5/DRK family. As to quaternary structure, interacts with phosphorylated LAT and LAX1 upon TCR activation. Interacts with SHB. Interacts with PTPN23. Interacts with phosphorylated LIME1 upon TCR activation.

The protein resides in the nucleus. Its subcellular location is the cytoplasm. It localises to the endosome. Its function is as follows. Interacts with SLP-76 to regulate NF-AT activation. Binds to tyrosine-phosphorylated shc. The protein is GRB2-related adaptor protein 2 (Grap2) of Mus musculus (Mouse).